The following is a 268-amino-acid chain: Undecaprenyl-diphosphatase (268 aa).

A run of 7 helical transmembrane segments spans residues 47–67, 83–103, 109–129, 144–164, 184–204, 218–238, and 246–266; these read FAILIQLGAILAIVALYFFKL, FIIGVLIAFLPAVIIGLIAGK, LFDPWVVCFSLIVGGAILLWV, YPLLMYLWIGVAQCLAMIPGV, AAEFSFFLAIPTMVGAFVYDF, LVAIGFVVSFITAMIVVKAFL, and FVLFAWWRVIVGTLGLIALAL.

Belongs to the UppP family.

It localises to the cell inner membrane. The catalysed reaction is di-trans,octa-cis-undecaprenyl diphosphate + H2O = di-trans,octa-cis-undecaprenyl phosphate + phosphate + H(+). Its function is as follows. Catalyzes the dephosphorylation of undecaprenyl diphosphate (UPP). Confers resistance to bacitracin. The protein is Undecaprenyl-diphosphatase of Bradyrhizobium sp. (strain BTAi1 / ATCC BAA-1182).